A 284-amino-acid polypeptide reads, in one-letter code: F-box protein PP2-B13 (284 aa).

Positions Met1–Phe44 constitute an F-box domain.

This Arabidopsis thaliana (Mouse-ear cress) protein is F-box protein PP2-B13 (PP2B13).